The sequence spans 539 residues: T-complex protein 1 subunit zeta (539 aa).

The protein belongs to the TCP-1 chaperonin family. Heterooligomeric complex of about 850 to 900 kDa that forms two stacked rings, 12 to 16 nm in diameter.

It is found in the cytoplasm. In terms of biological role, molecular chaperone; assists the folding of proteins upon ATP hydrolysis. Known to play a role, in vitro, in the folding of actin and tubulin. The sequence is that of T-complex protein 1 subunit zeta (cct-6) from Caenorhabditis elegans.